Reading from the N-terminus, the 244-residue chain is Tetraspanin-7 (244 aa).

Residues 1 to 11 (METKPVITCLK) are Cytoplasmic-facing. Residues 12–35 (TLLIIYSFVFWITGVILLAVGVWG) form a helical membrane-spanning segment. The Extracellular segment spans residues 36–51 (KLTLGTYISLIAENST). Asn-49 carries N-linked (GlcNAc...) asparagine glycosylation. Residues 52–70 (NAPYVLIGTGTTIVVFGLF) traverse the membrane as a helical segment. Residues 71-81 (GCFATCRGSPW) are Cytoplasmic-facing. A helical membrane pass occupies residues 82–107 (MLKLYAMFLSLVFLAELVAGISGFVF). Residues 108-208 (RHEIKDTFLR…LVTSFMETNM (101 aa)) are Extracellular-facing. 4 N-linked (GlcNAc...) asparagine glycosylation sites follow: Asn-150, Asn-153, Asn-172, and Asn-183. Residues 209–229 (GIIAGVAFGIAFSQLIGMLLA) traverse the membrane as a helical segment. Residues 230–244 (CCLSRFITANQYEMV) lie on the Cytoplasmic side of the membrane.

It belongs to the tetraspanin (TM4SF) family.

The protein localises to the membrane. Its function is as follows. May be involved in cell proliferation and cell motility. The protein is Tetraspanin-7 (TSPAN7) of Pan troglodytes (Chimpanzee).